Reading from the N-terminus, the 124-residue chain is Small ribosomal subunit protein uS12 (124 aa).

A 3-methylthioaspartic acid modification is found at D89. Residues S104–K124 form a disordered region. Residues N111 to K124 show a composition bias toward basic residues.

It belongs to the universal ribosomal protein uS12 family. Part of the 30S ribosomal subunit. Contacts proteins S8 and S17. May interact with IF1 in the 30S initiation complex.

Its function is as follows. With S4 and S5 plays an important role in translational accuracy. Functionally, interacts with and stabilizes bases of the 16S rRNA that are involved in tRNA selection in the A site and with the mRNA backbone. Located at the interface of the 30S and 50S subunits, it traverses the body of the 30S subunit contacting proteins on the other side and probably holding the rRNA structure together. The combined cluster of proteins S8, S12 and S17 appears to hold together the shoulder and platform of the 30S subunit. The sequence is that of Small ribosomal subunit protein uS12 from Desulforamulus reducens (strain ATCC BAA-1160 / DSM 100696 / MI-1) (Desulfotomaculum reducens).